The primary structure comprises 1021 residues: PDZ domain-containing protein 7 (1021 aa).

PDZ domains lie at 86–156 and 210–279; these read AVRV…LTSS and IVHL…EVLK. Positions 324-344 are enriched in low complexity; sequence SSSSVSSYASSAPCSSGSLPS. 3 disordered regions span residues 324–345, 431–495, and 724–814; these read SSSSVSSYASSAPCSSGSLPSD, ITRS…DSRS, and RRGA…HRPR. Residues 729–744 show a composition bias toward pro residues; sequence APPPQPPPVAPRPPRP. The span at 758–767 shows a compositional bias: polar residues; that stretch reads QQNQSQTPAQ. Residues 772–794 show a composition bias toward basic residues; it reads SRSRSRSRSHSRGQGKSPGRRRS. Residues 799-808 are compositionally biased toward low complexity; sequence PIATAATANG. Residues 858-930 enclose the PDZ 3 domain; it reads TITLSKMKQS…QRAVDTIRRA (73 aa). The tract at residues 992 to 1021 is disordered; the sequence is QLQQSLSSALKVPQSIPKLSPILKDPHDPS.

In terms of assembly, homodimerizes (via PDZ2 domain). Component of USH2 complex, composed of ADGRV1, PDZD7, USH2A and WHRN. Interacts (via PDZ domains) with WHRN; the interaction is direct. Interacts with USH1G. Interacts with ADGRV1 (via the cytoplasmic region). Interacts with USH2A (via the cytoplasmic region). Interacts with MYO7A (via MyTH4-FERM domains). In terms of tissue distribution, isoform 1 is expressed in developing and adult cochlea but not retina. Isoform 2 is expressed in developing and adult cochlea and retina. Isoform 3 is expressed in adult cochlea and retina. Isoform 4 is expressed in retina and developing cochlea but not adult cochlea. Isoform 5 is expressed in adult cochlea but not in developing cochlea or retina.

The protein resides in the cell projection. Its subcellular location is the cilium. The protein localises to the nucleus. It is found in the stereocilium. Functionally, in cochlear developing hair cells, essential in organizing the USH2 complex at stereocilia ankle links. Blocks inhibition of adenylate cyclase activity mediated by ADGRV1. This chain is PDZ domain-containing protein 7, found in Mus musculus (Mouse).